Consider the following 279-residue polypeptide: Energy-coupling factor transporter ATP-binding protein EcfA1 (279 aa).

Positions 6–240 (LSIEGVSFRY…GSKLERIGLD (235 aa)) constitute an ABC transporter domain. 40–47 (GHNGSGKS) provides a ligand contact to ATP.

This sequence belongs to the ABC transporter superfamily. Energy-coupling factor EcfA family. In terms of assembly, forms a stable energy-coupling factor (ECF) transporter complex composed of 2 membrane-embedded substrate-binding proteins (S component), 2 ATP-binding proteins (A component) and 2 transmembrane proteins (T component).

Its subcellular location is the cell membrane. Functionally, ATP-binding (A) component of a common energy-coupling factor (ECF) ABC-transporter complex. Unlike classic ABC transporters this ECF transporter provides the energy necessary to transport a number of different substrates. The sequence is that of Energy-coupling factor transporter ATP-binding protein EcfA1 from Geobacillus kaustophilus (strain HTA426).